Here is a 364-residue protein sequence, read N- to C-terminus: Pyrimidine monooxygenase RutA (364 aa).

Residues 49 to 50 (IK), N115, E124, 140 to 141 (RY), and S190 contribute to the FMN site.

It belongs to the NtaA/SnaA/DszA monooxygenase family. RutA subfamily.

It carries out the reaction uracil + FMNH2 + NADH + O2 = (Z)-3-ureidoacrylate + FMN + NAD(+) + H2O + H(+). It catalyses the reaction thymine + FMNH2 + NADH + O2 = (Z)-2-methylureidoacrylate + FMN + NAD(+) + H2O + H(+). In terms of biological role, catalyzes the pyrimidine ring opening between N-3 and C-4 by an unusual flavin hydroperoxide-catalyzed mechanism, adding oxygen atoms in the process to yield ureidoacrylate peracid, that immediately reacts with FMN forming ureidoacrylate and FMN-N(5)-oxide. The FMN-N(5)-oxide reacts spontaneously with NADH to produce FMN. Requires the flavin reductase RutF to regenerate FMN in vivo. The polypeptide is Pyrimidine monooxygenase RutA (Methylorubrum extorquens (strain ATCC 14718 / DSM 1338 / JCM 2805 / NCIMB 9133 / AM1) (Methylobacterium extorquens)).